The sequence spans 135 residues: MATIQQLIRKGRKKIKYNSKSPALGGCPQRRGICTKVTTMKPRKPNSSMKKVAKVRLSNGKEVNVYIPGEGHNLQEHSAVLIQGGGVNDLPGINYRIIRGTLDTAGVNGRIQSRSRYGAKKGAAKQAAAAKSKKK.

Asp-89 is subject to 3-methylthioaspartic acid. The disordered stretch occupies residues 114–135 (RSRYGAKKGAAKQAAAAKSKKK). The segment covering 124–135 (AKQAAAAKSKKK) has biased composition (low complexity).

It belongs to the universal ribosomal protein uS12 family. Part of the 30S ribosomal subunit. Contacts proteins S8 and S17. May interact with IF1 in the 30S initiation complex.

In terms of biological role, with S4 and S5 plays an important role in translational accuracy. Interacts with and stabilizes bases of the 16S rRNA that are involved in tRNA selection in the A site and with the mRNA backbone. Located at the interface of the 30S and 50S subunits, it traverses the body of the 30S subunit contacting proteins on the other side and probably holding the rRNA structure together. The combined cluster of proteins S8, S12 and S17 appears to hold together the shoulder and platform of the 30S subunit. In Amoebophilus asiaticus (strain 5a2), this protein is Small ribosomal subunit protein uS12.